Consider the following 215-residue polypeptide: 3,4-dihydroxy-2-butanone 4-phosphate synthase (215 aa).

D-ribulose 5-phosphate is bound by residues 38 to 39 (RE), aspartate 43, 151 to 155 (RRGHT), and glutamate 175. Mg(2+) is bound at residue glutamate 39. Histidine 154 provides a ligand contact to Mg(2+).

It belongs to the DHBP synthase family. In terms of assembly, homodimer. Requires Mg(2+) as cofactor. Mn(2+) serves as cofactor.

It catalyses the reaction D-ribulose 5-phosphate = (2S)-2-hydroxy-3-oxobutyl phosphate + formate + H(+). Its pathway is cofactor biosynthesis; riboflavin biosynthesis; 2-hydroxy-3-oxobutyl phosphate from D-ribulose 5-phosphate: step 1/1. Catalyzes the conversion of D-ribulose 5-phosphate to formate and 3,4-dihydroxy-2-butanone 4-phosphate. This chain is 3,4-dihydroxy-2-butanone 4-phosphate synthase, found in Haemophilus influenzae (strain PittEE).